The primary structure comprises 193 residues: Ribonuclease HII (193 aa).

One can recognise an RNase H type-2 domain in the interval Met1 to Ser193. A divalent metal cation contacts are provided by Asp6, Glu7, and Asp103.

Belongs to the RNase HII family. Mn(2+) serves as cofactor. Mg(2+) is required as a cofactor.

The protein localises to the cytoplasm. The enzyme catalyses Endonucleolytic cleavage to 5'-phosphomonoester.. Functionally, endonuclease that specifically degrades the RNA of RNA-DNA hybrids. In Helicobacter acinonychis (strain Sheeba), this protein is Ribonuclease HII.